A 435-amino-acid chain; its full sequence is Putative FBD-associated F-box protein At5g56820 (435 aa).

One can recognise an F-box domain in the interval 14-60; the sequence is SDRISYLPDDLLLRILSFIHTSDAISTSLLSKRWKFVWKMMPTLDLD. One can recognise an FBD domain in the interval 341–390; it reads VRKPNSVPECLTFHLETLEWQGYAGRPEDKEIAVYILGNALRLNTATISR.

The protein is Putative FBD-associated F-box protein At5g56820 of Arabidopsis thaliana (Mouse-ear cress).